A 588-amino-acid chain; its full sequence is Polyamine deacetylase HDAC10 (588 aa).

The tract at residues 1–302 is histone deacetylase; that stretch reads MGTALVYHED…AGGRICAVLE (302 aa). The active site involves H135.

The protein belongs to the histone deacetylase family. HD type 2 subfamily. In terms of assembly, interacts with HDAC3. Interacts with HDAC2 and NCOR2/SMRT. Interacts with HSPA8/HSC70. Interacts with MSH2.

The protein localises to the cytoplasm. Its subcellular location is the nucleus. It carries out the reaction N(8)-acetylspermidine + H2O = spermidine + acetate. It catalyses the reaction N-acetylputrescine + H2O = putrescine + acetate. The catalysed reaction is N-acetylcadaverine + H2O = cadaverine + acetate. The enzyme catalyses N(6)-acetyl-L-lysyl-[protein] + H2O = L-lysyl-[protein] + acetate. Polyamine deacetylase (PDAC), which acts preferentially on N(8)-acetylspermidine, and also on acetylcadaverine and acetylputrescine. Exhibits attenuated catalytic activity toward N(1),N(8)-diacetylspermidine and very low activity, if any, toward N(1)-acetylspermidine. Histone deacetylase activity has been observed in vitro. Has also been shown to be involved in MSH2 deacetylation. The physiological relevance of protein/histone deacetylase activity is unclear and could be very weak. May play a role in the promotion of late stages of autophagy, possibly autophagosome-lysosome fusion and/or lysosomal exocytosis in neuroblastoma cells. May play a role in homologous recombination. May promote DNA mismatch repair. This Rattus norvegicus (Rat) protein is Polyamine deacetylase HDAC10 (Hdac10).